The primary structure comprises 374 residues: UDP-N-acetylglucosamine--N-acetylmuramyl-(pentapeptide) pyrophosphoryl-undecaprenol N-acetylglucosamine transferase (374 aa).

Residues 13–15 (TGG), N124, R165, S193, and Q294 each bind UDP-N-acetyl-alpha-D-glucosamine.

The protein belongs to the glycosyltransferase 28 family. MurG subfamily.

The protein localises to the cell inner membrane. It carries out the reaction di-trans,octa-cis-undecaprenyl diphospho-N-acetyl-alpha-D-muramoyl-L-alanyl-D-glutamyl-meso-2,6-diaminopimeloyl-D-alanyl-D-alanine + UDP-N-acetyl-alpha-D-glucosamine = di-trans,octa-cis-undecaprenyl diphospho-[N-acetyl-alpha-D-glucosaminyl-(1-&gt;4)]-N-acetyl-alpha-D-muramoyl-L-alanyl-D-glutamyl-meso-2,6-diaminopimeloyl-D-alanyl-D-alanine + UDP + H(+). The protein operates within cell wall biogenesis; peptidoglycan biosynthesis. Its function is as follows. Cell wall formation. Catalyzes the transfer of a GlcNAc subunit on undecaprenyl-pyrophosphoryl-MurNAc-pentapeptide (lipid intermediate I) to form undecaprenyl-pyrophosphoryl-MurNAc-(pentapeptide)GlcNAc (lipid intermediate II). This is UDP-N-acetylglucosamine--N-acetylmuramyl-(pentapeptide) pyrophosphoryl-undecaprenol N-acetylglucosamine transferase from Rhizobium etli (strain ATCC 51251 / DSM 11541 / JCM 21823 / NBRC 15573 / CFN 42).